A 383-amino-acid polypeptide reads, in one-letter code: Succinyl-diaminopimelate desuccinylase (383 aa).

Position 73 (H73) interacts with Zn(2+). D75 is a catalytic residue. D107 serves as a coordination point for Zn(2+). E141 functions as the Proton acceptor in the catalytic mechanism. Residues E142, E170, and H356 each contribute to the Zn(2+) site.

Belongs to the peptidase M20A family. DapE subfamily. In terms of assembly, homodimer. Zn(2+) is required as a cofactor. Co(2+) serves as cofactor.

The enzyme catalyses N-succinyl-(2S,6S)-2,6-diaminopimelate + H2O = (2S,6S)-2,6-diaminopimelate + succinate. It functions in the pathway amino-acid biosynthesis; L-lysine biosynthesis via DAP pathway; LL-2,6-diaminopimelate from (S)-tetrahydrodipicolinate (succinylase route): step 3/3. Its function is as follows. Catalyzes the hydrolysis of N-succinyl-L,L-diaminopimelic acid (SDAP), forming succinate and LL-2,6-diaminopimelate (DAP), an intermediate involved in the bacterial biosynthesis of lysine and meso-diaminopimelic acid, an essential component of bacterial cell walls. The polypeptide is Succinyl-diaminopimelate desuccinylase (Pseudomonas syringae pv. syringae (strain B728a)).